The chain runs to 848 residues: MNHDSFSSLKFRRPSSKLHKDPPSIGSRMLKSQQSNTSLKRHPSAPVYPRSSASRSREHSRTRSNAYGSSTSSLDQNSGGPSPVLANNESGYFSGNHNTTKSRPPHSGRFSLNDQSSDELIGSPFDSRGMLSALQENTAESDRQPIQKPPTLRSQTTPDTRGLRQSASFTALHNRMDALVNRTDSDRSTNTKRYSDEGNGTKPVGRSKKASFSSFVNSMLGSPRGIKISAPENPVHVTHVGYDNQTGQFTGLPKEWQRLLQESGISKKEQEEHPQTMVDIMRFYEKNAQGDDEVWHKFDHAYAHHHPVTTSSSQPSSGGSTPYGTVGQRASSPTSPRFPQNHEGSFENPRAPPPIPRGAPAATQAMSPPVGGLVPNRAPPRPPAAANMTPARPAPQPPTTASYATTRPVQDPWPQFGTIPENAQPFGTPPIPESEPLPSGPQLSRSNSKANGATAPWVSPAVTPSPTQYQQQQEQAMATAQQAIASKQLDRSQSLRQQQAQQPKQKQATHPTPQQVSPVEDPSAALQQSARAVPAARPRQRARQSNAMDIRSRLVAICTPGDPTKMYYNLNKIGQGASGGVFTAYHNGTGSCVAIKQMNLDLQPKKDLIINEIIVMKDSKHKNIVNFLDSYLHGLDLWVVMEYMEGGSLTDVVTFNIMSEGQIAAVCRETLNGLQHLHSKGVIHRDIKSDNILLSLDGNIKLTDFGFCAQINDSHNKRNTMVGTPYWMAPEVVTRKEYGRKVDIWSLGIMAIEMIEGEPPYLTESPLRALYLIATNGTPTIKDEQSLTPVFRDFLHLALKVDPEKRASAHDLLKHPFMSFCAPLSHLAPLVKAARLSRAQEKAQKGGH.

The tract at residues 1 to 208 (MNHDSFSSLK…NGTKPVGRSK (208 aa)) is disordered. Polar residues-rich tracts occupy residues 65 to 102 (NAYGSSTSSLDQNSGGPSPVLANNESGYFSGNHNTTKS) and 152 to 171 (LRSQTTPDTRGLRQSASFTA). Positions 183-196 (TDSDRSTNTKRYSD) are enriched in basic and acidic residues. Residues 228–241 (ISAPENPVHVTHVG) form the CRIB domain. A disordered region spans residues 306–547 (HPVTTSSSQP…PRQRARQSNA (242 aa)). The segment covering 308–327 (VTTSSSQPSSGGSTPYGTVG) has biased composition (low complexity). A compositionally biased stretch (polar residues) spans 328-338 (QRASSPTSPRF). Residues 427 to 439 (GTPPIPESEPLPS) show a composition bias toward pro residues. Positions 441-451 (PQLSRSNSKAN) are enriched in polar residues. Composition is skewed to low complexity over residues 468 to 515 (QYQQ…TPQQ) and 527 to 537 (QQSARAVPAAR). The Protein kinase domain maps to 567 to 818 (YYNLNKIGQG…AHDLLKHPFM (252 aa)). ATP contacts are provided by residues 573-581 (IGQGASGGV) and K596. The active-site Proton acceptor is the D686.

The protein belongs to the protein kinase superfamily. STE Ser/Thr protein kinase family. STE20 subfamily.

The protein resides in the cytoplasm. It is found in the nucleus. The enzyme catalyses L-seryl-[protein] + ATP = O-phospho-L-seryl-[protein] + ADP + H(+). It catalyses the reaction L-threonyl-[protein] + ATP = O-phospho-L-threonyl-[protein] + ADP + H(+). Functionally, MAP4K component of the MAPK pathway required for the mating pheromone response and the regulation of cell polarity and cell cycle. The chain is Serine/threonine-protein kinase ste20 (ste20) from Aspergillus oryzae (strain ATCC 42149 / RIB 40) (Yellow koji mold).